An 89-amino-acid chain; its full sequence is LYR motif-containing protein 4 (89 aa).

It belongs to the complex I LYR family.

It is found in the mitochondrion. It localises to the nucleus. It participates in cofactor biosynthesis; iron-sulfur cluster biosynthesis. Its function is as follows. Required for nuclear and mitochondrial iron-sulfur protein biosynthesis. The polypeptide is LYR motif-containing protein 4 (lyrm4) (Danio rerio (Zebrafish)).